Here is a 1409-residue protein sequence, read N- to C-terminus: Mediator of RNA polymerase II transcription subunit 23 (1409 aa).

The interval 1359-1409 (ASAAGQGPAQGGPQSQQPQTTGQAGGQPSVPQQQQQTQQQQPQQQQQVQQQ) is disordered.

Belongs to the Mediator complex subunit 23 family. Component of the Mediator complex.

It localises to the nucleus. Its function is as follows. Component of the Mediator complex, a coactivator involved in the regulated transcription of nearly all RNA polymerase II-dependent genes. Mediator functions as a bridge to convey information from gene-specific regulatory proteins to the basal RNA polymerase II transcription machinery. Mediator is recruited to promoters by direct interactions with regulatory proteins and serves as a scaffold for the assembly of a functional preinitiation complex with RNA polymerase II and the general transcription factors. The chain is Mediator of RNA polymerase II transcription subunit 23 (MED23) from Aedes aegypti (Yellowfever mosquito).